The chain runs to 202 residues: Pectinesterase inhibitor 11 (202 aa).

Positions 1-21 (MAKQIFYTLFLFLLSTAILTA) are cleaved as a signal peptide. Residues cysteine 43 and cysteine 52 are joined by a disulfide bond. Residue asparagine 76 is glycosylated (N-linked (GlcNAc...) asparagine). Cysteines 109 and 160 form a disulfide.

It belongs to the PMEI family.

The protein resides in the secreted. It localises to the extracellular space. The protein localises to the apoplast. Functionally, pectin methylesterase (PME) inhibitor involved in the maintenance of cell wall integrity in response to necrotrophic pathogens. Modulates PME activity and pectin methylesterification during infection by Botrytis cinerea and contributes to resistance against the pathogen. In Arabidopsis thaliana (Mouse-ear cress), this protein is Pectinesterase inhibitor 11.